The primary structure comprises 643 residues: E3 ubiquitin-protein ligase Praja-1 (643 aa).

Residues 1 to 363 (MGQESSKPVW…SDDYYKYCDE (363 aa)) form a disordered region. Basic and acidic residues-rich tracts occupy residues 95 to 105 (DYSRYPPREYR), 145 to 158 (KFKDDKLYDPEKGA), and 173 to 183 (RDVREERDKLD). Residues 200–209 (QSSVASQSSS) are compositionally biased toward low complexity. Over residues 213–227 (LATKGDSSERERREQ) the composition is skewed to basic and acidic residues. At Ser-265 the chain carries Phosphoserine. Phosphothreonine is present on Thr-277. Composition is skewed to basic and acidic residues over residues 289-310 (RWRDTANDNEGHSDGLARRGRG) and 320-362 (KYPE…KYCD). Residues Ser-365 and Ser-367 each carry the phosphoserine modification. A disordered region spans residues 380 to 454 (RSREQTLSSS…REPSLQEEQA (75 aa)). Positions 410 to 439 (SASTGTSPGPGASASAGAGAGASAGSNGSN) are enriched in low complexity. Residues 595–636 (CPICCSEYVKGEVATELPCHHYFHKPCVSIWLQKSGTCPVCR) form an RING-type zinc finger.

Binds ubiquitin-conjugating enzymes (E2s). In vitro, interacts with the ubiquitin-conjugating enzyme, UBE2D2. Post-translationally, substrate for E2-dependent ubiquitination. Expressed in various regions of the brain including the cerebellum, cerebral cortex, medulla, occipital pole, frontal lobe, temporal lobe and putamen. Highest levels in the cerebral cortex.

The catalysed reaction is S-ubiquitinyl-[E2 ubiquitin-conjugating enzyme]-L-cysteine + [acceptor protein]-L-lysine = [E2 ubiquitin-conjugating enzyme]-L-cysteine + N(6)-ubiquitinyl-[acceptor protein]-L-lysine.. Its function is as follows. Has E2-dependent E3 ubiquitin-protein ligase activity. Ubiquitinates MAGED1 antigen leading to its subsequent degradation by proteasome. May be involved in protein sorting. The polypeptide is E3 ubiquitin-protein ligase Praja-1 (PJA1) (Homo sapiens (Human)).